A 271-amino-acid polypeptide reads, in one-letter code: Tryptophan synthase alpha chain (271 aa).

Catalysis depends on proton acceptor residues Glu49 and Asp60.

Belongs to the TrpA family. In terms of assembly, tetramer of two alpha and two beta chains.

The catalysed reaction is (1S,2R)-1-C-(indol-3-yl)glycerol 3-phosphate + L-serine = D-glyceraldehyde 3-phosphate + L-tryptophan + H2O. It participates in amino-acid biosynthesis; L-tryptophan biosynthesis; L-tryptophan from chorismate: step 5/5. Functionally, the alpha subunit is responsible for the aldol cleavage of indoleglycerol phosphate to indole and glyceraldehyde 3-phosphate. This is Tryptophan synthase alpha chain from Nitrosococcus oceani (strain ATCC 19707 / BCRC 17464 / JCM 30415 / NCIMB 11848 / C-107).